Reading from the N-terminus, the 173-residue chain is MTPNQKDGPRSNQEIRVPCIQLINDEGQNQGIVSTQEALAMAANIGLDLVEIVPNAEPPVCKIVDLGKLKYQNQKKAAETRKKQKIIEIKEIKLRPNVDVHDYGVKLKAIHRFIEHGNKVKITLRFRGREMAHQDLGVKLLERMKEDVSEIAKIESEPKLENRQMMMVIAPKS.

This sequence belongs to the IF-3 family. As to quaternary structure, monomer.

Its subcellular location is the cytoplasm. Its function is as follows. IF-3 binds to the 30S ribosomal subunit and shifts the equilibrium between 70S ribosomes and their 50S and 30S subunits in favor of the free subunits, thus enhancing the availability of 30S subunits on which protein synthesis initiation begins. The polypeptide is Translation initiation factor IF-3 (Bartonella bacilliformis (strain ATCC 35685 / KC583 / Herrer 020/F12,63)).